We begin with the raw amino-acid sequence, 305 residues long: Nitrogen assimilation regulatory protein nac (305 aa).

The 58-residue stretch at 1-58 (MNFRRLKYFVKIVDIGSLTQAAEVLHIAQPALSQQVATLEGELNQQLLIRTKRGVTPT) folds into the HTH lysR-type domain. The H-T-H motif DNA-binding region spans 18-37 (LTQAAEVLHIAQPALSQQVA).

The protein belongs to the LysR transcriptional regulatory family.

In terms of biological role, transcriptional activator for the hut, put and ure operons and repressor for the gdh and gltB operons in response to nitrogen limitation. Negative regulator of its own expression. The protein is Nitrogen assimilation regulatory protein nac (nac) of Escherichia coli (strain K12).